The primary structure comprises 510 residues: Serine/threonine-protein kinase RIO3 (510 aa).

2 disordered regions span residues 100–126 (GSSSSVHFTPDRYHPKTMQETDSENED) and 143–191 (DEEN…DMVG). Composition is skewed to basic and acidic residues over residues 108–118 (TPDRYHPKTMQ) and 162–179 (TKHDTGVSGRRNADKTFN). The 276-residue stretch at 235 to 510 (LLLLKWINQG…RGISPAREYN (276 aa)) folds into the Protein kinase domain. Residues 241–249 (INQGVFDSV) and lysine 275 contribute to the ATP site. Aspartate 388 (proton acceptor) is an active-site residue. Over residues 474-499 (RSVDLRHDKSRPADMELKKYNEEKKA) the composition is skewed to basic and acidic residues. Positions 474 to 510 (RSVDLRHDKSRPADMELKKYNEEKKANRGISPAREYN) are disordered.

This sequence belongs to the protein kinase superfamily. RIO-type Ser/Thr kinase family. Mg(2+) is required as a cofactor. As to expression, expressed in tail neurons (PVQ and PHAL/PQR).

The enzyme catalyses L-seryl-[protein] + ATP = O-phospho-L-seryl-[protein] + ADP + H(+). The catalysed reaction is L-threonyl-[protein] + ATP = O-phospho-L-threonyl-[protein] + ADP + H(+). The protein is Serine/threonine-protein kinase RIO3 (riok-3) of Caenorhabditis elegans.